A 379-amino-acid chain; its full sequence is Homoserine O-acetyltransferase (379 aa).

The AB hydrolase-1 domain occupies 52–356; the sequence is NVVMVLHALT…IRGHDGFLVE (305 aa). Catalysis depends on S157, which acts as the Nucleophile. R227 is a substrate binding site. Residues D320 and H350 contribute to the active site. D351 provides a ligand contact to substrate.

It belongs to the AB hydrolase superfamily. MetX family. As to quaternary structure, homodimer.

It localises to the cytoplasm. The enzyme catalyses L-homoserine + acetyl-CoA = O-acetyl-L-homoserine + CoA. Its pathway is amino-acid biosynthesis; L-methionine biosynthesis via de novo pathway; O-acetyl-L-homoserine from L-homoserine: step 1/1. Its function is as follows. Transfers an acetyl group from acetyl-CoA to L-homoserine, forming acetyl-L-homoserine. The chain is Homoserine O-acetyltransferase from Mycobacterium marinum (strain ATCC BAA-535 / M).